Reading from the N-terminus, the 208-residue chain is Thymidylate kinase (208 aa).

Position 10-17 (10-17) interacts with ATP; the sequence is GPEGSGKT.

The protein belongs to the thymidylate kinase family.

The catalysed reaction is dTMP + ATP = dTDP + ADP. Its function is as follows. Phosphorylation of dTMP to form dTDP in both de novo and salvage pathways of dTTP synthesis. In Bacillus cereus (strain Q1), this protein is Thymidylate kinase.